Consider the following 103-residue polypeptide: Co-chaperonin GroES (103 aa).

This sequence belongs to the GroES chaperonin family. In terms of assembly, heptamer of 7 subunits arranged in a ring. Interacts with the chaperonin GroEL.

The protein localises to the cytoplasm. In terms of biological role, together with the chaperonin GroEL, plays an essential role in assisting protein folding. The GroEL-GroES system forms a nano-cage that allows encapsulation of the non-native substrate proteins and provides a physical environment optimized to promote and accelerate protein folding. GroES binds to the apical surface of the GroEL ring, thereby capping the opening of the GroEL channel. This chain is Co-chaperonin GroES, found in Prochlorococcus marinus (strain MIT 9211).